The following is an 869-amino-acid chain: Sodium-dependent phosphate transporter (869 aa).

The Extracellular portion of the chain corresponds to 1–18 (MEAVAELSAPSLAGAPGE). A helical membrane pass occupies residues 19–39 (YTWIVAVAGVTCFLTAFAIGA). At 40-54 (NDVANTFSSSVGSRA) the chain is on the cytoplasmic side. The helical transmembrane segment at 55-75 (IPLWAAIGMSAVLETVGATLL) threads the bilayer. Over 76-97 (GGAVTDSIRSKIIDFEVFRETP) the chain is Extracellular. A helical transmembrane segment spans residues 98-118 (SILMTGMLCALVGAGLWLFLA). Topologically, residues 119 to 120 (NH) are cytoplasmic. Residues 121–141 (LGLPVSTTHSIIGALLGFGLA) form a helical membrane-spanning segment. Over 142–154 (SGNVRAVKWTQVA) the chain is Extracellular. A helical membrane pass occupies residues 155–175 (FIVGSWVAAPLAASAAGATIF). The Cytoplasmic segment spans residues 176-196 (VCMRRLILRSRQPLRRAKRFL). Residues 197–217 (WIFIYLITLTFSVFLVFKNFF) traverse the membrane as a helical segment. At 218 to 250 (ELNVSCDQMVAGGRVEHFEPCRISRWADAHSGT) the chain is on the extracellular side. A helical transmembrane segment spans residues 251–271 (ALGIAVALSVALTFVISCLVY). Residues 272–720 (RFAFYRVESY…SGSADSEIGS (449 aa)) are Cytoplasmic-facing. Disordered regions lie at residues 286-312 (KRSSRTEPRDASEEGTGPSHARPGGLL), 374-401 (AAAAKPDVGTAAQSPESRFAADPVGSSV), and 453-571 (SAFL…KRER). A compositionally biased stretch (low complexity) spans 457–481 (SSPSSSVPPSSPSPSSTPSSPSASP). Residues 482–491 (RRPPSRPPVP) are compositionally biased toward pro residues. Over residues 492 to 509 (RTCSPAPVSPSVPRAFAS) the composition is skewed to low complexity. Positions 556-571 (PHPERRDEVPAAKRER) are enriched in basic and acidic residues. The helical transmembrane segment at 721–741 (PWYILLFGGLSMSLGLALLGY) threads the bilayer. Residues 742–759 (RVIKTVGVKLVKITPARG) lie on the Extracellular side of the membrane. A helical transmembrane segment spans residues 760–780 (FSMELGAAWTVLIFSAIGIPL). Over 781–837 (STTHCAVGSTVGVGLMEPKHPRRETGDGPVAEGEEPKKRAVQCPVINTASVNWKLFG) the chain is Cytoplasmic. The chain crosses the membrane as a helical span at residues 838–858 (GVFVSWIITIAFSALVTAALF). Over 859 to 869 (SFAAYSPRMVS) the chain is Extracellular.

The protein belongs to the inorganic phosphate transporter (PiT) (TC 2.A.20) family.

It is found in the cell membrane. It localises to the vacuole membrane. The protein resides in the cytoplasmic vesicle membrane. It catalyses the reaction 2 Na(+)(out) + phosphate(out) = 2 Na(+)(in) + phosphate(in). In terms of biological role, sodium-phosphate symporter which preferentially transports the monovalent form of phosphate with a stoichiometry of two sodium ions per phosphate ion. Plays a role in stabilizing the cytosolic pH and osmoregulation. May be required for optimal virulence of parasites in vivo. The protein is Sodium-dependent phosphate transporter of Toxoplasma gondii (strain ATCC 50861 / VEG).